Here is a 966-residue protein sequence, read N- to C-terminus: Receptor protein-tyrosine kinase CEPR1 (966 aa).

An N-terminal signal peptide occupies residues 1-22 (MRLKNFPFFVLFFFFCFNSNQS). Residues 23–592 (WGLMSSNQQP…QEPHGKKKLS (570 aa)) lie on the Extracellular side of the membrane. Asn61 is a glycosylation site (N-linked (GlcNAc...) asparagine). LRR repeat units lie at residues 70-94 (QGLV…VCSY), 95-120 (FPNL…TIPN), 122-144 (SLLR…FSQM), 145-168 (KSLR…IFNL), 170-194 (DLEY…VSKL), 195-218 (TKLT…IGNL), 219-242 (TSLV…IGNL), 245-267 (LRQL…IGNL), 268-291 (KNLT…ICSL), 292-315 (PNLR…LGNS), 317-339 (TLKI…LGSS), 341-363 (PMIA…VCKS), 365-386 (KLLY…TYGS), 387-411 (CKTL…VMSL), 412-435 (PHVS…IGNA), 437-459 (NLSE…LSHS), 460-483 (TNLV…VGRL), 484-507 (RKLN…LSNL), 508-531 (KSLN…LSEL), and 533-554 (PTSI…LIRG). Asn109, Asn120, Asn128, and Asn167 each carry an N-linked (GlcNAc...) asparagine glycan. Asn217 and Asn241 each carry an N-linked (GlcNAc...) asparagine glycan. N-linked (GlcNAc...) asparagine glycosylation is found at Asn269 and Asn301. N-linked (GlcNAc...) asparagine glycosylation occurs at Asn437. Asn527 and Asn537 each carry an N-linked (GlcNAc...) asparagine glycan. Residues 593-613 (SIWAILVSVFILVLGVIMFYL) traverse the membrane as a helical segment. Over 614 to 966 (RQRMSKNRAV…VSDHLTQTRL (353 aa)) the chain is Cytoplasmic. The region spanning 656-934 (LVDKNIVGHG…TMNEVVQLLI (279 aa)) is the Protein kinase domain. Residues 662-670 (VGHGGSGTV) and Lys684 each bind ATP. A phosphotyrosine mark is found at Tyr738 and Tyr775. Asp788 acts as the Proton acceptor in catalysis. Phosphotyrosine occurs at positions 831 and 838. Residues 937–966 (TPQGGPDMTSKPTTKIKDSIVSDHLTQTRL) form a disordered region.

Belongs to the protein kinase superfamily. Ser/Thr protein kinase family. In terms of assembly, interacts with the root-derived peptides CEP1, CEP3 and CEP5. Expressed in the vasculature, especially in phloem and procambium regions, of stems, leaves, cotyledons, sepals, pedals, pedicels, hypocotyls and roots (in primary and lateral roots, but not in root tips). Expressed in the root from the basal meristem onward. Present in the phloem pole pericycle and in the adjacent phloem.

It localises to the cell membrane. It catalyses the reaction L-tyrosyl-[protein] + ATP = O-phospho-L-tyrosyl-[protein] + ADP + H(+). In terms of biological role, receptor kinase involved in the perception of C-terminally encoded plant signaling peptide (CEP) and subsequent regulation of root and shoot development. Required for xylem and phloem cell files morphology and organization, probably by preventing ectopic lignification in phloem cells. Together with CEPR2, mediates systemic nitrogen (N)-demand signaling upon the perception of root-derived peptides (e.g. CEP1) via the up-regulation of genes involved in N uptake and assimilation pathways. Positively regulates lateral root initiation and development; probably repressed by the signaling peptide CEP5. This Arabidopsis thaliana (Mouse-ear cress) protein is Receptor protein-tyrosine kinase CEPR1.